The sequence spans 386 residues: Mannitol-1-phosphate 5-dehydrogenase (386 aa).

4 to 15 (AIHFGGGNIGRG) lines the NAD(+) pocket. Residue lysine 211 is part of the active site.

It belongs to the mannitol dehydrogenase family. Monomer.

It carries out the reaction D-mannitol 1-phosphate + NAD(+) = beta-D-fructose 6-phosphate + NADH + H(+). Its function is as follows. Catalyzes the NAD(H)-dependent interconversion of D-fructose 6-phosphate and D-mannitol 1-phosphate in the mannitol metabolic pathway. The polypeptide is Mannitol-1-phosphate 5-dehydrogenase (mpdA) (Emericella nidulans (strain FGSC A4 / ATCC 38163 / CBS 112.46 / NRRL 194 / M139) (Aspergillus nidulans)).